We begin with the raw amino-acid sequence, 591 residues long: L-fucose isomerase (591 aa).

Catalysis depends on proton acceptor residues E337 and D361. Mn(2+) is bound by residues E337, D361, and H528.

It belongs to the L-fucose isomerase family. As to quaternary structure, homohexamer. Mn(2+) serves as cofactor.

It localises to the cytoplasm. It carries out the reaction L-fucose = L-fuculose. It functions in the pathway carbohydrate degradation; L-fucose degradation; L-lactaldehyde and glycerone phosphate from L-fucose: step 1/3. Converts the aldose L-fucose into the corresponding ketose L-fuculose. In Salmonella choleraesuis (strain SC-B67), this protein is L-fucose isomerase.